We begin with the raw amino-acid sequence, 325 residues long: 4-hydroxy-3-methylbut-2-enyl diphosphate reductase (325 aa).

Cys13 is a [4Fe-4S] cluster binding site. (2E)-4-hydroxy-3-methylbut-2-enyl diphosphate is bound by residues His42 and His76. Residues His42 and His76 each contribute to the dimethylallyl diphosphate site. His42 and His76 together coordinate isopentenyl diphosphate. Cys98 is a [4Fe-4S] cluster binding site. His126 lines the (2E)-4-hydroxy-3-methylbut-2-enyl diphosphate pocket. His126 provides a ligand contact to dimethylallyl diphosphate. His126 is a binding site for isopentenyl diphosphate. Catalysis depends on Glu128, which acts as the Proton donor. A (2E)-4-hydroxy-3-methylbut-2-enyl diphosphate-binding site is contributed by Thr169. Cys230 contributes to the [4Fe-4S] cluster binding site. Ser258, Ser259, Asn260, and Ser306 together coordinate (2E)-4-hydroxy-3-methylbut-2-enyl diphosphate. The dimethylallyl diphosphate site is built by Ser258, Ser259, Asn260, and Ser306. Positions 258, 259, 260, and 306 each coordinate isopentenyl diphosphate.

This sequence belongs to the IspH family. Requires [4Fe-4S] cluster as cofactor.

The enzyme catalyses isopentenyl diphosphate + 2 oxidized [2Fe-2S]-[ferredoxin] + H2O = (2E)-4-hydroxy-3-methylbut-2-enyl diphosphate + 2 reduced [2Fe-2S]-[ferredoxin] + 2 H(+). The catalysed reaction is dimethylallyl diphosphate + 2 oxidized [2Fe-2S]-[ferredoxin] + H2O = (2E)-4-hydroxy-3-methylbut-2-enyl diphosphate + 2 reduced [2Fe-2S]-[ferredoxin] + 2 H(+). It participates in isoprenoid biosynthesis; dimethylallyl diphosphate biosynthesis; dimethylallyl diphosphate from (2E)-4-hydroxy-3-methylbutenyl diphosphate: step 1/1. The protein operates within isoprenoid biosynthesis; isopentenyl diphosphate biosynthesis via DXP pathway; isopentenyl diphosphate from 1-deoxy-D-xylulose 5-phosphate: step 6/6. Functionally, catalyzes the conversion of 1-hydroxy-2-methyl-2-(E)-butenyl 4-diphosphate (HMBPP) into a mixture of isopentenyl diphosphate (IPP) and dimethylallyl diphosphate (DMAPP). Acts in the terminal step of the DOXP/MEP pathway for isoprenoid precursor biosynthesis. In Chlorobium phaeobacteroides (strain BS1), this protein is 4-hydroxy-3-methylbut-2-enyl diphosphate reductase.